Here is a 384-residue protein sequence, read N- to C-terminus: Chaperone protein DnaJ (384 aa).

Residues 4–68 (DFYDVLGVSR…EKRQMYDQLG (65 aa)) enclose the J domain. Disordered regions lie at residues 74 to 105 (QAQKRGAGGGGGGRGQGNPFGGGGNPFGGMGG) and 113 to 132 (NNLFNGGGGQRRSRPQQGRD). Over residues 79–105 (GAGGGGGGRGQGNPFGGGGNPFGGMGG) the composition is skewed to gly residues. The segment at 147–229 (GVERDVTIRR…CRGSGRVRRT (83 aa)) adopts a CR-type zinc-finger fold. Zn(2+)-binding residues include Cys160, Cys163, Cys177, Cys180, Cys203, Cys206, Cys217, and Cys220. CXXCXGXG motif repeat units lie at residues 160 to 167 (CPECDGEG), 177 to 184 (CSECNGSG), 203 to 210 (CRACGGEG), and 217 to 224 (CSECRGSG).

It belongs to the DnaJ family. As to quaternary structure, homodimer. Zn(2+) is required as a cofactor.

Its subcellular location is the cytoplasm. In terms of biological role, participates actively in the response to hyperosmotic and heat shock by preventing the aggregation of stress-denatured proteins and by disaggregating proteins, also in an autonomous, DnaK-independent fashion. Unfolded proteins bind initially to DnaJ; upon interaction with the DnaJ-bound protein, DnaK hydrolyzes its bound ATP, resulting in the formation of a stable complex. GrpE releases ADP from DnaK; ATP binding to DnaK triggers the release of the substrate protein, thus completing the reaction cycle. Several rounds of ATP-dependent interactions between DnaJ, DnaK and GrpE are required for fully efficient folding. Also involved, together with DnaK and GrpE, in the DNA replication of plasmids through activation of initiation proteins. The chain is Chaperone protein DnaJ from Haloferax mediterranei (strain ATCC 33500 / DSM 1411 / JCM 8866 / NBRC 14739 / NCIMB 2177 / R-4) (Halobacterium mediterranei).